The primary structure comprises 310 residues: Endo-1,4-beta-xylanase B (310 aa).

The first 19 residues, 1-19 (MISLSSVAIALTTVVGALA), serve as a signal peptide directing secretion. The GH11 domain maps to 33–223 (AITSSQTGTN…SSGSASMTVS (191 aa)). The Nucleophile role is filled by Glu-119. Glu-210 serves as the catalytic Proton donor. The span at 218-227 (ASMTVSAGSS) shows a compositional bias: low complexity. The disordered stretch occupies residues 218–274 (ASMTVSAGSSSSGGSGSGSGSGSGSGSGSGSQTTTAGSSTGTGTGSGSGSGSGGSGG). Residues 228 to 246 (SSGGSGSGSGSGSGSGSGS) show a composition bias toward gly residues. Positions 247-256 (GSQTTTAGSS) are enriched in low complexity. The segment covering 257–274 (TGTGTGSGSGSGSGGSGG) has biased composition (gly residues). A CBM1 domain is found at 275–310 (NCAAQWGQCGGQGWNGPTCCSSGTCKASNQWYSQCL).

It belongs to the glycosyl hydrolase 11 (cellulase G) family.

The protein resides in the secreted. It catalyses the reaction Endohydrolysis of (1-&gt;4)-beta-D-xylosidic linkages in xylans.. It functions in the pathway glycan degradation; xylan degradation. Its function is as follows. Endo-1,4-beta-xylanase involved in the hydrolysis of xylan, a major structural heterogeneous polysaccharide found in plant biomass representing the second most abundant polysaccharide in the biosphere, after cellulose. Hydrolyzes birchwood xylan, beechwood xylan, and oat spelt xylan to produce short-chain xylooligosaccharides, xylopentaose, xylotriose, and xylobiose as the main products. The chain is Endo-1,4-beta-xylanase B (xynB) from Penicillium oxalicum.